The chain runs to 339 residues: 2'-deoxymugineic-acid 2'-dioxygenase (339 aa).

The 101-residue stretch at 184 to 284 (GGNVILNINH…RTSVATFIMP (101 aa)) folds into the Fe2OG dioxygenase domain. Residues H209, D211, and H265 each contribute to the Fe cation site. 2-oxoglutarate is bound at residue R275.

The protein belongs to the iron/ascorbate-dependent oxidoreductase family. It depends on Fe(2+) as a cofactor. Requires L-ascorbate as cofactor. The N-terminus is blocked.

It is found in the cytoplasm. It catalyses the reaction 2'-deoxymugineate + 2-oxoglutarate + O2 = mugineate + succinate + CO2. Functionally, involved in the biosynthesis of mugineic acid family of phytosiderophores. Hydroxylates the C-2' positions of 2'-deoxymugineic acid (DMA) and 3-epihydroxymugineic acid (epiHDMA). May be involved in boron tolerance. This chain is 2'-deoxymugineic-acid 2'-dioxygenase, found in Hordeum vulgare (Barley).